Reading from the N-terminus, the 182-residue chain is Ribosome-recycling factor (182 aa).

The interval 136-156 is disordered; that stretch reads VKKQEKDGDFSEDQSRDEQDS.

It belongs to the RRF family.

The protein localises to the cytoplasm. Functionally, responsible for the release of ribosomes from messenger RNA at the termination of protein biosynthesis. May increase the efficiency of translation by recycling ribosomes from one round of translation to another. The sequence is that of Ribosome-recycling factor from Synechococcus sp. (strain CC9902).